We begin with the raw amino-acid sequence, 678 residues long: Protein KHNYN (678 aa).

Position 10 is a phosphoserine (serine 10). 2 disordered regions span residues 222–251 and 347–407; these read QGVRAPPSDGRESLDTGSMGPGDCRGARGD and LHNG…ARGG. The span at 355–367 shows a compositional bias: pro residues; that stretch reads PRVPSPPPAPEPP. Serine 359 carries the post-translational modification Phosphoserine. Over residues 370 to 388 the composition is skewed to basic and acidic residues; sequence CGDRGDCGDRGDVGDRGDK. Positions 437 to 589 constitute an RNase NYN domain; the sequence is LRHIVIDGSN…LGRNGPTLDE (153 aa). Residues 595–633 are disordered; it reads ARTQGSSKAQHPSRGFAEHGKQQQGREEEKGSGGIRKTR. Residues 610–633 show a composition bias toward basic and acidic residues; that stretch reads FAEHGKQQQGREEEKGSGGIRKTR.

It belongs to the N4BP1 family.

This Homo sapiens (Human) protein is Protein KHNYN (KHNYN).